A 119-amino-acid chain; its full sequence is Large ribosomal subunit protein uL18 (119 aa).

The protein belongs to the universal ribosomal protein uL18 family. As to quaternary structure, part of the 50S ribosomal subunit; part of the 5S rRNA/L5/L18/L25 subcomplex. Contacts the 5S and 23S rRNAs.

In terms of biological role, this is one of the proteins that bind and probably mediate the attachment of the 5S RNA into the large ribosomal subunit, where it forms part of the central protuberance. This Borrelia hermsii (strain HS1 / DAH) protein is Large ribosomal subunit protein uL18.